Here is a 206-residue protein sequence, read N- to C-terminus: Probable glutathione S-transferase 7 (206 aa).

The region spanning 2-79 (VHYKVSYFPI…YLARQFGING (78 aa)) is the GST N-terminal domain. Glutathione-binding positions include Tyr-8, Trp-39, Lys-43, 49-51 (GQL), and 63-64 (QS). One can recognise a GST C-terminal domain in the interval 81-206 (CAWEEAQVNS…WLETRPVTPF (126 aa)).

It belongs to the GST superfamily. Sigma family.

The enzyme catalyses RX + glutathione = an S-substituted glutathione + a halide anion + H(+). Conjugation of reduced glutathione to a wide number of exogenous and endogenous hydrophobic electrophiles. May play a role in the detoxification of reactive oxygen species produced during pathogenic bacterial infection. This chain is Probable glutathione S-transferase 7 (gst-7), found in Caenorhabditis elegans.